The chain runs to 287 residues: Diaminopimelate epimerase (287 aa).

3 residues coordinate substrate: N13, Q46, and N66. The active-site Proton donor is the C75. Substrate-binding positions include 76–77, N166, N199, and 217–218; these read GN and ER. The active-site Proton acceptor is the C226. 227-228 lines the substrate pocket; it reads GT.

The protein belongs to the diaminopimelate epimerase family. As to quaternary structure, homodimer.

Its subcellular location is the cytoplasm. The enzyme catalyses (2S,6S)-2,6-diaminopimelate = meso-2,6-diaminopimelate. The protein operates within amino-acid biosynthesis; L-lysine biosynthesis via DAP pathway; DL-2,6-diaminopimelate from LL-2,6-diaminopimelate: step 1/1. In terms of biological role, catalyzes the stereoinversion of LL-2,6-diaminopimelate (L,L-DAP) to meso-diaminopimelate (meso-DAP), a precursor of L-lysine and an essential component of the bacterial peptidoglycan. This Paraburkholderia xenovorans (strain LB400) protein is Diaminopimelate epimerase.